The sequence spans 212 residues: Small ribosomal subunit protein uS3 (212 aa).

A KH type-2 domain is found at 38 to 106 (IRKFVKKTLY…EFAIEVNEIR (69 aa)).

It belongs to the universal ribosomal protein uS3 family. In terms of assembly, part of the 30S ribosomal subunit. Forms a tight complex with proteins S10 and S14.

Functionally, binds the lower part of the 30S subunit head. Binds mRNA in the 70S ribosome, positioning it for translation. The chain is Small ribosomal subunit protein uS3 from Nitratidesulfovibrio vulgaris (strain ATCC 29579 / DSM 644 / CCUG 34227 / NCIMB 8303 / VKM B-1760 / Hildenborough) (Desulfovibrio vulgaris).